Reading from the N-terminus, the 234-residue chain is Ribulose-phosphate 3-epimerase (234 aa).

Ser-7 lines the substrate pocket. Residues His-32, Asp-34, and His-65 each contribute to the a divalent metal cation site. The Proton acceptor role is filled by Asp-34. Residues His-65, 139–142 (GFSG), 172–174 (DGG), and 194–195 (AS) each bind substrate. A divalent metal cation is bound at residue Asp-172. Residue Asp-172 is the Proton donor of the active site.

This sequence belongs to the ribulose-phosphate 3-epimerase family. A divalent metal cation is required as a cofactor.

It carries out the reaction D-ribulose 5-phosphate = D-xylulose 5-phosphate. It functions in the pathway carbohydrate degradation. In terms of biological role, catalyzes the reversible epimerization of D-ribulose 5-phosphate to D-xylulose 5-phosphate. The chain is Ribulose-phosphate 3-epimerase from Methanocaldococcus jannaschii (strain ATCC 43067 / DSM 2661 / JAL-1 / JCM 10045 / NBRC 100440) (Methanococcus jannaschii).